Reading from the N-terminus, the 523-residue chain is Tubulin-specific chaperone E (523 aa).

The CAP-Gly domain occupies 31-75; sequence GEVSGHMGSWLGIEWDDGLRGKHNGIVDGKRYFQTQTPTGGSFIR. LRR repeat units follow at residues 155 to 180, 181 to 204, 209 to 232, 235 to 258, 260 to 284, 285 to 310, and 315 to 337; these read LTHLTTLNVSHTLIWNWEIVASIAQQ, LPSLTNLNLSSNRLVLPTSSQITE, FRQLKRINLRSCGFSDWKDVMHTA, WPNILSLGLQENSLGQLAEVDRTK, FKQLHELDLHRTNIMDFDQVTKLGN, LTTLRLLNIMENGIEEIKLPDCDSQE, and FVSLEQLNLLHNPIWNEADAFNE.

This sequence belongs to the TBCE family.

The protein localises to the cytoplasm. Tubulin-folding protein which is required for the development of the neuronal microtubule network. Essential for the development and function of neuromuscular synapses. Likely to promote microtubule formation by acting in the negative regulation of the microtubule-severing protein spas. The sequence is that of Tubulin-specific chaperone E from Drosophila melanogaster (Fruit fly).